Reading from the N-terminus, the 122-residue chain is Putative 2'-deoxynucleoside 5'-phosphate N-hydrolase 1 (122 aa).

Residues 4–10 (FLSGSIR), Y19, H37, E83, and 105–107 (SAM) contribute to the substrate site.

Belongs to the 2'-deoxynucleoside 5'-phosphate N-hydrolase 1 family. In terms of assembly, monomer and homodimer.

The catalysed reaction is a pyrimidine 2'-deoxyribonucleoside 5'-phosphate + H2O = a pyrimidine nucleobase + 2-deoxy-D-ribose 5-phosphate. It carries out the reaction a purine 2'-deoxyribonucleoside 5'-phosphate + H2O = a purine nucleobase + 2-deoxy-D-ribose 5-phosphate. Catalyzes the cleavage of the N-glycosidic bond of deoxyribonucleoside 5'-monophosphates to yield deoxyribose 5-phosphate and a purine or pyrimidine base. The chain is Putative 2'-deoxynucleoside 5'-phosphate N-hydrolase 1 from Methanococcoides burtonii (strain DSM 6242 / NBRC 107633 / OCM 468 / ACE-M).